A 339-amino-acid chain; its full sequence is Glucokinase (339 aa).

An ATP-binding site is contributed by 16–21 (GDIGGT).

Belongs to the bacterial glucokinase family.

The protein resides in the cytoplasm. It carries out the reaction D-glucose + ATP = D-glucose 6-phosphate + ADP + H(+). The polypeptide is Glucokinase (Pseudomonas paraeruginosa (strain DSM 24068 / PA7) (Pseudomonas aeruginosa (strain PA7))).